Consider the following 696-residue polypeptide: VAQKTVRWCTISNQEANKCSSFRENMSKAVKNGPLVSCVKKSSYLDCIKAIRDKEADAVTLDAGLVFEAGLAPYNLKPVVAEFYGQKDNPQTHYYAVAVVKKGSNFQWNQLQGKRSCHTGLGRSAGWIIPMGLLYDQLPEPRKPIEKAVASFFSSSCVPCADPVNFPKLCQQCAGKGAEKCACSNHEPYFGYAGAFNCLKEDAGDVAFVKHSTVLENLPDKADRDQYELLCRDNTRRPVDDYENCYLAQVPSHAVVARSVDGQEDSIWELLNQAQEHFGRDKSPDFQLFSSSHGKDLLFKDSANGFLKIPSKMDSSLYLGYQYVTALRNLREEISPDSSKNECKKVRWCAIGHEETQKCDAWSINSGGKIECVSAENTEDCIAKIVKGEADAMSLDGGYIYIAGKCGLVPVLAENYKTEGENCVNTPEKGYLAVAVVKKSSGPDLNWNNLKGKKSCHTAVDRTAGWNIPMGLLYNKINSCKFDQFFGEGCAPGSQRNSSLCALCIGSERAPGRECLANNHERYYGYTGAFRCLVEKGDVAFVKDQVVQQNTDGKNKDDWAKDLKQMDFELLCQNGAREPVDNAENCHLARAPNHAVVARDDKVTCVAEELLKQQAQFGRHVTDCSSSFCMFKSNTKDLLFRDDTQCLARVGKTTYESYLGADYITAVANLRKCSTSKLLEACTFHSAKNPRVETTT.

Transferrin-like domains follow at residues 6–332 and 346–672; these read VRWC…NLRE and VRWC…NLRK. Disulfide bonds link C9-C47 and C19-C38. At R23 the chain carries Dimethylated arginine. N-linked (GlcNAc...) asparagine glycosylation occurs at N25. Residues D62 and Y94 each coordinate Fe(3+). 5 disulfides stabilise this stretch: C117–C198, C157–C173, C160–C181, C170–C183, and C231–C245. 4 residues coordinate hydrogencarbonate: T119, R123, A125, and G126. Y192 serves as a coordination point for Fe(3+). H253 is a binding site for Fe(3+). Intrachain disulfides connect C343/C605, C349/C381, C359/C372, C406/C682, C423/C646, C456/C532, C480/C673, C490/C504, C501/C515, C572/C586, and C624/C629. Phosphoserine is present on S374. The Fe(3+) site is built by D396 and Y431. Hydrogencarbonate is bound by residues T458, R462, A464, and G465. N-linked (GlcNAc...) asparagine glycosylation is present at N497. Y526 contributes to the Fe(3+) binding site. Position 594 (H594) interacts with Fe(3+). At S674 the chain carries Phosphoserine.

Belongs to the transferrin family. As to quaternary structure, monomer. Part of a complex composed of SLC40A1/ferroportin, TF/transferrin and HEPH/hephaestin that transfers iron from cells to transferrin. In terms of tissue distribution, expressed by the liver and secreted in plasma.

It is found in the secreted. Its function is as follows. Transferrins are iron binding transport proteins which can bind two Fe(3+) ions in association with the binding of an anion, usually bicarbonate. It is responsible for the transport of iron from sites of absorption and heme degradation to those of storage and utilization. Serum transferrin may also have a further role in stimulating cell proliferation. The protein is Serotransferrin (TF) of Sus scrofa (Pig).